The sequence spans 335 residues: Probable G-protein coupled receptor 174 (335 aa).

The Extracellular portion of the chain corresponds to 1–27 (MTDNFTCNKTDGDNTDFRYFIYAVTYT). N4 and N8 each carry an N-linked (GlcNAc...) asparagine glycan. Residues 28–48 (VILVPGLIGNILALWVFYGYM) form a helical membrane-spanning segment. Residues 49–53 (KETKR) lie on the Cytoplasmic side of the membrane. Residues 54 to 74 (AVVFMINLAIADLLQILSLPL) form a helical membrane-spanning segment. Over 75–91 (RIFYYLNHDWPFGPGLC) the chain is Extracellular. Residues C91 and C168 are joined by a disulfide bond. The chain crosses the membrane as a helical span at residues 92-112 (MFCFYLKYVNMYASIYFLVCI). Residues 113-134 (SVRRFWFLMYPFRFNDCKQKYD) lie on the Cytoplasmic side of the membrane. Residues 135-155 (LYISIIGWLIICLACLLFPLL) form a helical membrane-spanning segment. The Extracellular segment spans residues 156-182 (RTNDDTPGNRTKCFVDLPIRNVNLAQS). N-linked (GlcNAc...) asparagine glycosylation occurs at N164. Residues 183–203 (VAMITIGEVVGFVTPLMIVLY) traverse the membrane as a helical segment. Residues 204–231 (CTWKTALSLQNKYPISQHLGEKKKALKM) lie on the Cytoplasmic side of the membrane. The chain crosses the membrane as a helical span at residues 232-252 (ILTCAGVFLVCFVPYHFSFPL). Over 253–268 (DFLVKSNEIKSCFARR) the chain is Extracellular. A helical transmembrane segment spans residues 269-289 (VILIFHSVALCLASLNSCLDP). Residues 290 to 335 (VIYYFTTNEFRRRLSRQDLPDNIQLHTKSYKIASNHATSTVAAELC) lie on the Cytoplasmic side of the membrane.

The protein belongs to the G-protein coupled receptor 1 family. As to quaternary structure, interacts with GNA13. Interacts with CCL21. As to expression, expressed in spleen and, at low levels, in brain. Highly expressed in developing and mature regulatory T-cells.

The protein localises to the cell membrane. Functionally, G-protein-coupled receptor of lysophosphatidylserine (LysoPS) that plays different roles in immune response. Plays a negative role in regulatory T-cell accumulation and homeostasis. Under inflammatory conditions where LysoPS production increases, contributes to the down-regulation of regulatory T-cell activity to favor effector response. Mediates the suppression of IL-2 production in activated T-lymphocytes leading to inhibition of growth, proliferation and differentiation of T-cells. Mechanistically, acts via G(s)-containing heterotrimeric G proteins to trigger elevated cyclic AMP levels and protein kinase A/PKA activity, which may in turn act to antagonize proximal TCR signaling. Plays an important role in the initial period of sepsis through the regulation of macrophage polarization and pro- and anti-inflammatory cytokine secretions. Upon testosterone treatment, acts as a receptor for CCL21 and subsequently triggers through G(q)-alpha and G(12)/G(13) proteins a calcium flux leading to chemotactic effects on activated B-cells. Signals via GNA13 and PKA to promote CD86 up-regulation by follicular B-cells. This Mus musculus (Mouse) protein is Probable G-protein coupled receptor 174 (Gpr174).